The sequence spans 260 residues: Hemin import ATP-binding protein HmuV (260 aa).

In terms of domain architecture, ABC transporter spans 6–242; that stretch reads LSGRNISMKY…ERIEQVYGYR (237 aa). 38–45 is a binding site for ATP; sequence GPNGAGKS.

This sequence belongs to the ABC transporter superfamily. Heme (hemin) importer (TC 3.A.1.14.5) family. As to quaternary structure, the complex is composed of two ATP-binding proteins (HmuV), two transmembrane proteins (HmuU) and a solute-binding protein (HmuT).

It localises to the cell inner membrane. In terms of biological role, part of the ABC transporter complex HmuTUV involved in hemin import. Responsible for energy coupling to the transport system. The sequence is that of Hemin import ATP-binding protein HmuV from Vibrio parahaemolyticus serotype O3:K6 (strain RIMD 2210633).